Here is a 566-residue protein sequence, read N- to C-terminus: E3 ubiquitin-protein ligase Rnf220 (566 aa).

Lys277 participates in a covalent cross-link: Glycyl lysine isopeptide (Lys-Gly) (interchain with G-Cter in SUMO2). Positions 277-300 are disordered; the sequence is KREGDSPTASPHSSATEDLHHSDR. Over residues 291-300 the composition is skewed to basic and acidic residues; sequence ATEDLHHSDR. Ser390 carries the phosphoserine modification. The stretch at 485–513 forms a coiled coil; sequence EESAVTTFEALKARVRELERQLSRGDRYK. The segment at 514-522 is required for targeting to the cytoplasm; sequence CLICMDSYS. Residues 514-553 form an RING-type zinc finger; the sequence is CLICMDSYSMPLTSIQCWHVHCEECWLRTLGAKKLCPQCN.

As to quaternary structure, interacts with SIN3B. Interacts with CTNNB1 (via Armadillo repeats 2-8). Interacts with USP7 (via MATH domain). In terms of processing, auto-ubiquitinated; leads to proteasomal degradation. In terms of tissue distribution, in the brain, expressed in the hippocampus, telenecephalon and cerebellum. No expression in astro glial cells or in neural progenitor cells.

The protein localises to the cytoplasm. The protein resides in the nucleus. It carries out the reaction S-ubiquitinyl-[E2 ubiquitin-conjugating enzyme]-L-cysteine + [acceptor protein]-L-lysine = [E2 ubiquitin-conjugating enzyme]-L-cysteine + N(6)-ubiquitinyl-[acceptor protein]-L-lysine.. It participates in protein modification; protein ubiquitination. In terms of biological role, E3 ubiquitin-protein ligase that promotes the ubiquitination and proteasomal degradation of SIN3B. Independently of its E3 ligase activity, acts as a CTNNB1 stabilizer through USP7-mediated deubiquitination of CTNNB1 and promotes Wnt signaling. Plays a critical role in the regulation of nuclear lamina. This Mus musculus (Mouse) protein is E3 ubiquitin-protein ligase Rnf220 (Rnf220).